Consider the following 125-residue polypeptide: Small ribosomal subunit protein uS12 (125 aa).

At D89 the chain carries 3-methylthioaspartic acid. The interval S101–A125 is disordered. Positions S113 to A125 are enriched in basic residues.

Belongs to the universal ribosomal protein uS12 family. As to quaternary structure, part of the 30S ribosomal subunit. Contacts proteins S8 and S17. May interact with IF1 in the 30S initiation complex.

In terms of biological role, with S4 and S5 plays an important role in translational accuracy. Interacts with and stabilizes bases of the 16S rRNA that are involved in tRNA selection in the A site and with the mRNA backbone. Located at the interface of the 30S and 50S subunits, it traverses the body of the 30S subunit contacting proteins on the other side and probably holding the rRNA structure together. The combined cluster of proteins S8, S12 and S17 appears to hold together the shoulder and platform of the 30S subunit. The sequence is that of Small ribosomal subunit protein uS12 from Thiobacillus denitrificans (strain ATCC 25259 / T1).